The sequence spans 772 residues: Mitochondrial intermediate peptidase (772 aa).

The N-terminal 42 residues, 1–42 (MFANSARNALKKRPQNLQPFRFQGCLFSKRANRPLTTKVQHL), are a transit peptide targeting the mitochondrion. A Zn(2+)-binding site is contributed by H556. E557 is an active-site residue. The Zn(2+) site is built by H560 and H563.

This sequence belongs to the peptidase M3 family. The cofactor is Zn(2+).

Its subcellular location is the mitochondrion matrix. The enzyme catalyses Release of an N-terminal octapeptide as second stage of processing of some proteins imported into the mitochondrion.. In terms of biological role, cleaves proteins, imported into the mitochondrion, to their mature size. While most mitochondrial precursor proteins are processed to the mature form in one step by mitochondrial processing peptidase (MPP), the sequential cleavage by MIP of an octapeptide after initial processing by MPP is a required step for a subgroup of nuclear-encoded precursor proteins destined for the matrix or the inner membrane. The sequence is that of Mitochondrial intermediate peptidase (OCT1) from Laccaria bicolor (strain S238N-H82 / ATCC MYA-4686) (Bicoloured deceiver).